A 561-amino-acid chain; its full sequence is MENRKGGNFSVPSSEALTTTLRNAIQALGRGFDVTSDVRLLYCKGAPGSRLVRIEEGQNRDLELSHGFLLPNVPADIDCSRGNSGTQRISVCSFHEMAEEFNVRSGVKGNIPLGCFNAMFNYTGSWQVDAASTKSLALVGYFIPLYDVKLAKLTLVLHNEIRRAVPSSWDPASLASFIENYGTHIVTSVTIGGRDVVYIRQHQSSPLPVSEIENYVNDMIKHRFHEAESQSITGPLKYKDKDITVIFRRRGGDDLEQSHARWAETVPAAPDIINMTFTPIVSLLEGVPGLRHLTRAIELYLEYKPPIEDLQYFLDYQIARAWAPEQSNLQRKEPVCSSLQFSLMGPKLFISADQVTVGRKPVTGLRLSLEGSKQNRLSIHLQHLVSLPKILQPHWDSHVPIGAPKWQGPEEQDSRWFEPIKWKNFSHVSTSPIEHTETHIGDLSGVHIVTGAQLGVWDFGSKNVLHLKLLFSKVPGCTIRRSVWDHTPVASSGRLEPGGPSTSSSTEEVSGQSGKLAKIVDSSEMLKGPQDLPGHWLVTGAKLGVEKGKIVLRVKYSLLNY.

The MACPF domain occupies Val11–Leu314. A disordered region spans residues Val489–Gly514. Over residues Pro500–Ser513 the composition is skewed to polar residues.

This sequence belongs to the complement C6/C7/C8/C9 (TC 1.C.39) family. In terms of tissue distribution, mainly expressed in the vascular system.

Functionally, negatively controls the salicylic acid (SA)-mediated pathway of programmed cell death in plant immunity. This Arabidopsis thaliana (Mouse-ear cress) protein is MACPF domain-containing protein CAD1 (CAD1).